A 102-amino-acid chain; its full sequence is A-type ATP synthase subunit F (102 aa).

The protein belongs to the V-ATPase F subunit family. As to quaternary structure, has multiple subunits with at least A(3), B(3), C, D, E, F, H, I and proteolipid K(x).

It is found in the cell membrane. Its function is as follows. Component of the A-type ATP synthase that produces ATP from ADP in the presence of a proton gradient across the membrane. The chain is A-type ATP synthase subunit F from Thermococcus gammatolerans (strain DSM 15229 / JCM 11827 / EJ3).